Here is a 94-residue protein sequence, read N- to C-terminus: Integration host factor subunit beta (94 aa).

Belongs to the bacterial histone-like protein family. In terms of assembly, heterodimer of an alpha and a beta chain.

This protein is one of the two subunits of integration host factor, a specific DNA-binding protein that functions in genetic recombination as well as in transcriptional and translational control. This Escherichia coli O127:H6 (strain E2348/69 / EPEC) protein is Integration host factor subunit beta.